The chain runs to 443 residues: Amino-acid acetyltransferase (443 aa).

Residues 296–443 (EQIRRATIND…RSKVLMADLG (148 aa)) enclose the N-acetyltransferase domain.

The protein belongs to the acetyltransferase family. ArgA subfamily. As to quaternary structure, homohexamer.

The protein localises to the cytoplasm. The catalysed reaction is L-glutamate + acetyl-CoA = N-acetyl-L-glutamate + CoA + H(+). Its pathway is amino-acid biosynthesis; L-arginine biosynthesis; N(2)-acetyl-L-ornithine from L-glutamate: step 1/4. This Salmonella typhi protein is Amino-acid acetyltransferase (argA).